A 791-amino-acid polypeptide reads, in one-letter code: Probable phosphoketolase (791 aa).

The protein belongs to the XFP family. Thiamine diphosphate serves as cofactor.

In Chlorobaculum tepidum (strain ATCC 49652 / DSM 12025 / NBRC 103806 / TLS) (Chlorobium tepidum), this protein is Probable phosphoketolase.